Here is a 63-residue protein sequence, read N- to C-terminus: Sperm protamine P1 (63 aa).

Residues 1-63 are disordered; that stretch reads MARYRRHSRS…RYSRRGRRRY (63 aa).

This sequence belongs to the protamine P1 family. In terms of tissue distribution, testis.

The protein localises to the nucleus. The protein resides in the chromosome. Protamines substitute for histones in the chromatin of sperm during the haploid phase of spermatogenesis. They compact sperm DNA into a highly condensed, stable and inactive complex. This chain is Sperm protamine P1 (PRM1), found in Pseudantechinus macdonnellensis (Fat-tailed marsupial mouse).